The sequence spans 623 residues: Glutamine--fructose-6-phosphate aminotransferase [isomerizing] (623 aa).

The active-site Nucleophile; for GATase activity is cysteine 2. The Glutamine amidotransferase type-2 domain occupies 2–228; the sequence is CGIVGYIGQA…NDQVVTITAD (227 aa). 2 consecutive SIS domains span residues 295–435 and 468–613; these read IDEA…LRGN and LGQD…VDQP. The active-site For Fru-6P isomerization activity is lysine 618.

In terms of assembly, homodimer.

The protein resides in the cytoplasm. It catalyses the reaction D-fructose 6-phosphate + L-glutamine = D-glucosamine 6-phosphate + L-glutamate. Functionally, catalyzes the first step in hexosamine metabolism, converting fructose-6P into glucosamine-6P using glutamine as a nitrogen source. The protein is Glutamine--fructose-6-phosphate aminotransferase [isomerizing] of Corynebacterium glutamicum (strain ATCC 13032 / DSM 20300 / JCM 1318 / BCRC 11384 / CCUG 27702 / LMG 3730 / NBRC 12168 / NCIMB 10025 / NRRL B-2784 / 534).